Here is a 285-residue protein sequence, read N- to C-terminus: MLYLTKIRNAESEFTGNEQKIADFLRANVSELKSVSSRKMAKQLGISQSSIVKFAQKLGAQGFTELRMALIGEYSASREKTNATALHLHSSITSDDSLEVIARKLNREKELALEQTCALFDYARLQKIIEVISKAPFIQITGLGGSALVGRDLSFKLMKIGYRVACEADTHVQATVSQALKKGDVQIAISYSGSKKEIVLCAEAARKQGATVIAITSLADSPLRRLAHFTLDTVSGETEWRSSSMSTRTAQNSVTDLLFVGLVQLNDVESLKMIQRSSELTQRLK.

The HTH rpiR-type domain occupies 1–77 (MLYLTKIRNA…MALIGEYSAS (77 aa)). Residues 37–56 (SRKMAKQLGISQSSIVKFAQ) constitute a DNA-binding region (H-T-H motif). Residues 128 to 268 (IIEVISKAPF…FVGLVQLNDV (141 aa)) enclose the SIS domain.

As to quaternary structure, homotetramer.

It participates in amino-sugar metabolism; N-acetylmuramate degradation [regulation]. In terms of biological role, represses the expression of the murPQ operon involved in the uptake and degradation of N-acetylmuramic acid (MurNAc). Binds to two adjacent inverted repeats within the operator region. MurNAc 6-phosphate, the substrate of MurQ, is the specific inducer that weakens binding of MurR to the operator. This Escherichia coli O9:H4 (strain HS) protein is HTH-type transcriptional regulator MurR.